Here is a 61-residue protein sequence, read N- to C-terminus: Metallothionein-2 (61 aa).

Position 1 is an N-acetylmethionine (methionine 1). Residues 1-29 (MDPNCSCATDGSCSCAGSCKCKQCKCTSC) form a beta region. A divalent metal cation is bound by residues cysteine 5, cysteine 7, cysteine 13, cysteine 15, cysteine 19, cysteine 21, cysteine 24, cysteine 26, cysteine 29, cysteine 33, cysteine 34, cysteine 36, cysteine 37, cysteine 41, cysteine 44, cysteine 48, cysteine 50, and cysteine 57. The alpha stretch occupies residues 30–61 (KKSCCSCCPVGCAKCSQGCICKEASDKCSCCA). A Phosphoserine modification is found at serine 58. 2 residues coordinate a divalent metal cation: cysteine 59 and cysteine 60.

This sequence belongs to the metallothionein superfamily. Type 1 family.

Metallothioneins have a high content of cysteine residues that bind various heavy metals; these proteins are transcriptionally regulated by both heavy metals and glucocorticoids. The chain is Metallothionein-2 (Mt2) from Rattus norvegicus (Rat).